The sequence spans 190 residues: Voltage-dependent calcium channel gamma-like subunit (190 aa).

4 helical membrane-spanning segments follow: residues Phe-25–Ile-45, Ala-96–Glu-116, Leu-131–Asn-151, and Leu-155–Asn-175.

The protein belongs to the PMP-22/EMP/MP20 family. CACNG subfamily. In terms of assembly, the L-type calcium channel is composed of five subunits: alpha-1, alpha-2/delta, beta and gamma.

The protein resides in the membrane. Its function is as follows. Thought to stabilize the calcium channel in an inactivated (closed) state. Modulates calcium current when coexpressed with CACNA1G. The polypeptide is Voltage-dependent calcium channel gamma-like subunit (Homo sapiens (Human)).